The primary structure comprises 319 residues: Glutamyl-Q tRNA(Asp) synthetase (319 aa).

Residues 23–27 and Glu-59 contribute to the L-glutamate site; that span reads RFAPS. The 'HIGH' region motif lies at 26–36; that stretch reads PSPSGPLHAGS. Zn(2+)-binding residues include Cys-115, Cys-117, Tyr-139, and Cys-143. Residues Tyr-197 and Arg-215 each coordinate L-glutamate. A 'KMSKS' region motif is present at residues 254 to 258; it reads KLSKQ. Lys-257 lines the ATP pocket.

Belongs to the class-I aminoacyl-tRNA synthetase family. GluQ subfamily. Zn(2+) serves as cofactor.

In terms of biological role, catalyzes the tRNA-independent activation of glutamate in presence of ATP and the subsequent transfer of glutamate onto a tRNA(Asp). Glutamate is transferred on the 2-amino-5-(4,5-dihydroxy-2-cyclopenten-1-yl) moiety of the queuosine in the wobble position of the QUC anticodon. This is Glutamyl-Q tRNA(Asp) synthetase from Bordetella bronchiseptica (strain ATCC BAA-588 / NCTC 13252 / RB50) (Alcaligenes bronchisepticus).